The primary structure comprises 157 residues: Small ribosomal subunit protein uS7 (157 aa).

Belongs to the universal ribosomal protein uS7 family. As to quaternary structure, part of the 30S ribosomal subunit. Contacts proteins S9 and S11.

One of the primary rRNA binding proteins, it binds directly to 16S rRNA where it nucleates assembly of the head domain of the 30S subunit. Is located at the subunit interface close to the decoding center, probably blocks exit of the E-site tRNA. This chain is Small ribosomal subunit protein uS7, found in Roseiflexus castenholzii (strain DSM 13941 / HLO8).